A 48-amino-acid polypeptide reads, in one-letter code: U1-theraphotoxin-Agm1a (48 aa).

3 disulfide bridges follow: C4–C34, C8–C40, and C22–C45. Residue M44 is modified to Methionine sulfoxide; partial.

Belongs to the neurotoxin 12 (Hwtx-2) family. 01 (Ap1a) subfamily. As to expression, expressed by the venom gland.

The protein resides in the secreted. Functionally, is toxic to both insects and mammals. Induces reversible paralysis when injected into S.frugiperda larvae. Reduces both the amplitude and frequency of responses from muscle (GF-TTM and GF-DLM) pathways in the D.melanogaster giant fiber circuit, suggesting an action at the neuromuscular junction, which is mediated by glutamatergic receptors. In mice, intracranial injection of 30 ug causes increased urination, myoclonus, hypermotility with circular movements followed by respiratory and generalized seizures resulting in death within 25-35 minutes of injection. This Acanthoscurria gomesiana (Tarantula spider) protein is U1-theraphotoxin-Agm1a.